The sequence spans 124 residues: RESPAMKFQRQHMDSGNSPGNNPNYCNQMMMRRKMTQGRCKPVNTFVHESLEDVKAVCSQKNVLCKNGRTNCYESNSTMHITDCRQTGSSKYPNCAYKTSQKEKHIIVACEGNPYVPVHFDNSV.

Positions 1 to 23 are disordered; it reads RESPAMKFQRQHMDSGNSPGNNP. 2 residues coordinate substrate: lysine 7 and arginine 10. Catalysis depends on histidine 12, which acts as the Proton acceptor. The segment covering 14–23 has biased composition (polar residues); it reads DSGNSPGNNP. 4 disulfide bridges follow: cysteine 26–cysteine 84, cysteine 40–cysteine 95, cysteine 58–cysteine 110, and cysteine 65–cysteine 72. Residues 41–45 and lysine 66 contribute to the substrate site; that span reads KPVNT. A glycan (N-linked (GlcNAc...) asparagine; partial) is linked at asparagine 76. Residue arginine 85 participates in substrate binding. The active-site Proton donor is histidine 119.

The protein belongs to the pancreatic ribonuclease family. Monomer. Interacts with and forms tight 1:1 complexes with RNH1. Dimerization of two such complexes may occur. Interaction with RNH1 inhibits this protein. As to expression, pancreas.

The protein resides in the secreted. The catalysed reaction is an [RNA] containing cytidine + H2O = an [RNA]-3'-cytidine-3'-phosphate + a 5'-hydroxy-ribonucleotide-3'-[RNA].. The enzyme catalyses an [RNA] containing uridine + H2O = an [RNA]-3'-uridine-3'-phosphate + a 5'-hydroxy-ribonucleotide-3'-[RNA].. Endonuclease that catalyzes the cleavage of RNA on the 3' side of pyrimidine nucleotides. Acts on single-stranded and double-stranded RNA. This is Ribonuclease pancreatic (RNASE1) from Balaenoptera acutorostrata (Common minke whale).